The primary structure comprises 166 residues: Putative peroxisomal peroxiredoxin (166 aa).

The region spanning 5–166 (FPEDVKFLYI…SGVDAVLAAL (162 aa)) is the Thioredoxin domain. Cysteine 56 serves as the catalytic Cysteine sulfenic acid (-SOH) intermediate.

The protein belongs to the peroxiredoxin family. Prx5 subfamily. As to quaternary structure, homodimer; disulfide-linked, upon oxidation.

The catalysed reaction is a hydroperoxide + [protein]-dithiol = [protein]-disulfide + an alcohol + H2O. Its function is as follows. Thiol-specific peroxidase that catalyzes the reduction of hydrogen peroxide and organic hydroperoxides to water and alcohols, respectively. Plays a role in cell protection against oxidative stress by detoxifying peroxides and as sensor of hydrogen peroxide-mediated signaling events. This chain is Putative peroxisomal peroxiredoxin, found in Lipomyces kononenkoae (Yeast).